Here is a 201-residue protein sequence, read N- to C-terminus: Probable nicotinate-nucleotide adenylyltransferase (201 aa).

Residues 182–201 (GPESSQSATSIRERGGWSLR) are disordered. The span at 192–201 (IRERGGWSLR) shows a compositional bias: basic and acidic residues.

The protein belongs to the NadD family.

It carries out the reaction nicotinate beta-D-ribonucleotide + ATP + H(+) = deamido-NAD(+) + diphosphate. The protein operates within cofactor biosynthesis; NAD(+) biosynthesis; deamido-NAD(+) from nicotinate D-ribonucleotide: step 1/1. Catalyzes the reversible adenylation of nicotinate mononucleotide (NaMN) to nicotinic acid adenine dinucleotide (NaAD). The chain is Probable nicotinate-nucleotide adenylyltransferase from Parvibaculum lavamentivorans (strain DS-1 / DSM 13023 / NCIMB 13966).